The following is a 417-amino-acid chain: Gamma-glutamyl phosphate reductase (417 aa).

Belongs to the gamma-glutamyl phosphate reductase family.

It is found in the cytoplasm. The catalysed reaction is L-glutamate 5-semialdehyde + phosphate + NADP(+) = L-glutamyl 5-phosphate + NADPH + H(+). It functions in the pathway amino-acid biosynthesis; L-proline biosynthesis; L-glutamate 5-semialdehyde from L-glutamate: step 2/2. Its function is as follows. Catalyzes the NADPH-dependent reduction of L-glutamate 5-phosphate into L-glutamate 5-semialdehyde and phosphate. The product spontaneously undergoes cyclization to form 1-pyrroline-5-carboxylate. The chain is Gamma-glutamyl phosphate reductase from Escherichia coli O6:H1 (strain CFT073 / ATCC 700928 / UPEC).